The chain runs to 305 residues: Insulin-like growth factor-binding protein 2 (305 aa).

Positions 1 to 34 are cleaved as a signal peptide; the sequence is MLPRLGGPALPLLLPSLLLLLLLGAGGCGPGVRA. Residues 36-118 enclose the IGFBP N-terminal domain; the sequence is VLFRCPPCTP…VTGAGTCEKR (83 aa). Cystine bridges form between Cys-40/Cys-68, Cys-43/Cys-70, Cys-51/Cys-71, Cys-59/Cys-74, Cys-82/Cys-95, Cys-89/Cys-115, Cys-207/Cys-241, Cys-252/Cys-263, and Cys-265/Cys-286. The region spanning 204-286 is the Thyroglobulin type-1 domain; it reads RTPCQQELDQ…APTIRGDPEC (83 aa). The Cell attachment site signature appears at 281–283; sequence RGD.

As to quaternary structure, interacts with IGF1. Interacts with IGF2. Interacts (via RGD motif) with integrin alpha5/ITGA5; this interaction induces cell migration, adhesion or apoptosis according to the context. Interacts with PTPRB; this interaction leads to PTPRB dimerization and inactivation. Post-translationally, cleaved by MMP9 leading to release of free IGF2 from IGFBP2-IGF2 complex, which contributes to enhance the motility and the growth of astrocytes. O-glycosylated. Highly expressed in adult liver, but also in kidney, lung, brain, spleen, testis and ovary.

It is found in the secreted. Multifunctional protein that plays a critical role in regulating the availability of IGFs such as IGF1 and IGF2 to their receptors and thereby regulates IGF-mediated cellular processes including proliferation, differentiation, and apoptosis in a cell-type specific manner. Functions coordinately with receptor protein tyrosine phosphatase beta/PTPRB and the IGF1 receptor to regulate IGF1-mediated signaling by stimulating the phosphorylation of PTEN leading to its inactivation and AKT1 activation. Plays a positive role in cell migration via interaction with integrin alpha5/ITGA5 through an RGD motif. Additionally, interaction with ITGA5/ITGB1 enhances the adhesion of endothelial progenitor cells to endothelial cells. Upon mitochondrial damage, facilitates apoptosis with ITGA5 of podocytes, and then activates the phosphorylation of focal adhesion kinase (FAK)-mediated mitochondrial injury. This is Insulin-like growth factor-binding protein 2 (Igfbp2) from Mus musculus (Mouse).